Here is a 417-residue protein sequence, read N- to C-terminus: NADH-quinone oxidoreductase subunit D (417 aa).

Belongs to the complex I 49 kDa subunit family. In terms of assembly, NDH-1 is composed of 14 different subunits. Subunits NuoB, C, D, E, F, and G constitute the peripheral sector of the complex.

Its subcellular location is the cell inner membrane. The enzyme catalyses a quinone + NADH + 5 H(+)(in) = a quinol + NAD(+) + 4 H(+)(out). NDH-1 shuttles electrons from NADH, via FMN and iron-sulfur (Fe-S) centers, to quinones in the respiratory chain. The immediate electron acceptor for the enzyme in this species is believed to be ubiquinone. Couples the redox reaction to proton translocation (for every two electrons transferred, four hydrogen ions are translocated across the cytoplasmic membrane), and thus conserves the redox energy in a proton gradient. In Polynucleobacter necessarius subsp. necessarius (strain STIR1), this protein is NADH-quinone oxidoreductase subunit D.